Reading from the N-terminus, the 204-residue chain is Salt stress root protein RS1 (204 aa).

Residues 128-204 (FVPKEEPKPE…AAPAAEPEKQ (77 aa)) form a disordered region. A compositionally biased stretch (basic and acidic residues) spans 147–161 (TSREVAVEEEKKEEE). A compositionally biased stretch (low complexity) spans 164 to 180 (PAEPAAAAAEAAAPSTE). The span at 182 to 192 (VEEKKEEEKPA) shows a compositional bias: basic and acidic residues. Residues 193–204 (EAAAPAAEPEKQ) show a composition bias toward low complexity.

Belongs to the DREPP family.

The sequence is that of Salt stress root protein RS1 from Oryza sativa subsp. indica (Rice).